Here is a 37-residue protein sequence, read N- to C-terminus: Large ribosomal subunit protein bL36 (37 aa).

The protein belongs to the bacterial ribosomal protein bL36 family.

The sequence is that of Large ribosomal subunit protein bL36 from Parasynechococcus marenigrum (strain WH8102).